A 109-amino-acid chain; its full sequence is Parvalbumin alpha (109 aa).

2 EF-hand domains span residues 38–73 (KSKEIMQKVFHVLDQDQSGFIEKEELCLILKGFTPE) and 77–109 (LSDKETTALLAAGDKDGDGKIGVDEFVTLVSES). Ca(2+)-binding residues include aspartate 51, aspartate 53, serine 55, phenylalanine 57, glutamate 59, glutamate 62, aspartate 90, aspartate 92, aspartate 94, lysine 96, and glutamate 101.

This sequence belongs to the parvalbumin family.

In muscle, parvalbumin is thought to be involved in relaxation after contraction. It binds two calcium ions. This Pelophylax lessonae (Pool frog) protein is Parvalbumin alpha.